We begin with the raw amino-acid sequence, 125 residues long: Holo-[acyl-carrier-protein] synthase (125 aa).

Mg(2+) is bound by residues D8 and E57.

It belongs to the P-Pant transferase superfamily. AcpS family. Mg(2+) is required as a cofactor.

The protein resides in the cytoplasm. It catalyses the reaction apo-[ACP] + CoA = holo-[ACP] + adenosine 3',5'-bisphosphate + H(+). Functionally, transfers the 4'-phosphopantetheine moiety from coenzyme A to a Ser of acyl-carrier-protein. The chain is Holo-[acyl-carrier-protein] synthase from Thermus thermophilus (strain ATCC BAA-163 / DSM 7039 / HB27).